The sequence spans 431 residues: MQMFCYQCSQAANGTGCTEYGVCGKSPTVARLQDNLVFAIKGISAYYYHARELGYDDPEIAGFLDEALYSTLTNVNFDAQSFVEYALEAGRMNLRAMQLLKKAHIETYGEPTPVEVETGTKKGKGIIVTGHNLKALEELLKQVEGTNVYVYTHSEMLPAHGYPGLRKYKNLVGNLGKAWYDQRKLFTEYPVAILGTSNCVLIPSESYRDRMFTTSIARLPGVKHIDGYDYTEVIEKAKSLPDLEEKPGSYKLRTGFSTSVVVSLADKIKELVEAGKIKHFLVVGGCDVPFKRNEYYREFVQKLPKETVVITLACGKFRINDLDLGDIEGIPRLIDVGQCNDTIVAIEIAQALAKVFGVEVTDLPLTLVLTWMEQKAVAILWTLLALGLKNIYVGPVLPAWVNEDILKVLTAEFGLKTISEPEKDIKEILKV.

Cys5, Cys8, Cys17, and Cys23 together coordinate [4Fe-4S] cluster. Positions 131, 155, 199, 286, 314, 339, 373, and 375 each coordinate hybrid [4Fe-2O-2S] cluster. Residue Cys286 is modified to Cysteine persulfide.

This sequence belongs to the HCP family. [4Fe-4S] cluster is required as a cofactor. The cofactor is hybrid [4Fe-2O-2S] cluster.

The protein resides in the cytoplasm. The catalysed reaction is A + NH4(+) + H2O = hydroxylamine + AH2 + H(+). Catalyzes the reduction of hydroxylamine to form NH(3) and H(2)O. The polypeptide is Hydroxylamine reductase (Thermotoga petrophila (strain ATCC BAA-488 / DSM 13995 / JCM 10881 / RKU-1)).